A 165-amino-acid polypeptide reads, in one-letter code: NAD(P)H-quinone oxidoreductase subunit I, chloroplastic (165 aa).

4Fe-4S ferredoxin-type domains are found at residues 55–84 and 95–124; these read GRIH…VDWE and KSYS…MTEE. Residues Cys-64, Cys-67, Cys-70, Cys-74, Cys-104, Cys-107, Cys-110, and Cys-114 each contribute to the [4Fe-4S] cluster site.

This sequence belongs to the complex I 23 kDa subunit family. In terms of assembly, NDH is composed of at least 16 different subunits, 5 of which are encoded in the nucleus. It depends on [4Fe-4S] cluster as a cofactor.

It is found in the plastid. It localises to the chloroplast thylakoid membrane. The catalysed reaction is a plastoquinone + NADH + (n+1) H(+)(in) = a plastoquinol + NAD(+) + n H(+)(out). It carries out the reaction a plastoquinone + NADPH + (n+1) H(+)(in) = a plastoquinol + NADP(+) + n H(+)(out). Its function is as follows. NDH shuttles electrons from NAD(P)H:plastoquinone, via FMN and iron-sulfur (Fe-S) centers, to quinones in the photosynthetic chain and possibly in a chloroplast respiratory chain. The immediate electron acceptor for the enzyme in this species is believed to be plastoquinone. Couples the redox reaction to proton translocation, and thus conserves the redox energy in a proton gradient. This Psilotum nudum (Whisk fern) protein is NAD(P)H-quinone oxidoreductase subunit I, chloroplastic.